A 365-amino-acid polypeptide reads, in one-letter code: Myb/SANT-like DNA-binding domain-containing protein 3 (365 aa).

In terms of domain architecture, Myb-like spans 13 to 78; that stretch reads FSELEKSVLL…QLKKCWENIK (66 aa). The stretch at 301 to 337 forms a coiled coil; it reads QLIQMNEVHVAKVQQIERECEMAEEEHRIKMEILNKK.

This sequence belongs to the MSANTD3 family.

The chain is Myb/SANT-like DNA-binding domain-containing protein 3 (msantd3) from Xenopus tropicalis (Western clawed frog).